The sequence spans 116 residues: Large ribosomal subunit protein bL19 (116 aa).

It belongs to the bacterial ribosomal protein bL19 family.

This protein is located at the 30S-50S ribosomal subunit interface and may play a role in the structure and function of the aminoacyl-tRNA binding site. This is Large ribosomal subunit protein bL19 from Staphylococcus haemolyticus (strain JCSC1435).